Reading from the N-terminus, the 172-residue chain is Peptide deformylase (172 aa).

Residues cysteine 91 and histidine 133 each coordinate Fe cation. The active site involves glutamate 134. Residue histidine 137 coordinates Fe cation.

This sequence belongs to the polypeptide deformylase family. The cofactor is Fe(2+).

The catalysed reaction is N-terminal N-formyl-L-methionyl-[peptide] + H2O = N-terminal L-methionyl-[peptide] + formate. In terms of biological role, removes the formyl group from the N-terminal Met of newly synthesized proteins. Requires at least a dipeptide for an efficient rate of reaction. N-terminal L-methionine is a prerequisite for activity but the enzyme has broad specificity at other positions. The polypeptide is Peptide deformylase (Vibrio campbellii (strain ATCC BAA-1116)).